The chain runs to 61 residues: MKPPMQPLTQALPFSLRDALQGTGLRVPVIKMGTGWEGMYRTLKEVAYILLCCWCIKELLD.

Preferentially expressed in the lens epithelial cells.

The chain is Lens epithelial cell protein LEP503 (Lenep) from Rattus norvegicus (Rat).